Here is a 204-residue protein sequence, read N- to C-terminus: Guanylate kinase (204 aa).

Residues 4–182 (GLLYVISAPS…ALNQLRAIVQ (179 aa)) form the Guanylate kinase-like domain. Position 11 to 18 (11 to 18 (APSGAGKT)) interacts with ATP.

It belongs to the guanylate kinase family.

The protein localises to the cytoplasm. The catalysed reaction is GMP + ATP = GDP + ADP. In terms of biological role, essential for recycling GMP and indirectly, cGMP. This is Guanylate kinase from Methylococcus capsulatus (strain ATCC 33009 / NCIMB 11132 / Bath).